The primary structure comprises 754 residues: Phosphoribosylformylglycinamidine synthase subunit PurL (754 aa).

The active site involves histidine 52. Residues tyrosine 55 and lysine 95 each coordinate ATP. Glutamate 97 contributes to the Mg(2+) binding site. Residues 98–101 (SHNH) and arginine 120 contribute to the substrate site. Histidine 99 acts as the Proton acceptor in catalysis. Position 121 (aspartate 121) interacts with Mg(2+). Glutamine 244 lines the substrate pocket. Residue aspartate 272 coordinates Mg(2+). Residue 316–318 (ESQ) participates in substrate binding. Positions 504 and 541 each coordinate ATP. Asparagine 542 is a Mg(2+) binding site. Residue serine 544 participates in substrate binding.

Belongs to the FGAMS family. As to quaternary structure, monomer. Part of the FGAM synthase complex composed of 1 PurL, 1 PurQ and 2 PurS subunits.

The protein resides in the cytoplasm. The catalysed reaction is N(2)-formyl-N(1)-(5-phospho-beta-D-ribosyl)glycinamide + L-glutamine + ATP + H2O = 2-formamido-N(1)-(5-O-phospho-beta-D-ribosyl)acetamidine + L-glutamate + ADP + phosphate + H(+). It functions in the pathway purine metabolism; IMP biosynthesis via de novo pathway; 5-amino-1-(5-phospho-D-ribosyl)imidazole from N(2)-formyl-N(1)-(5-phospho-D-ribosyl)glycinamide: step 1/2. Its function is as follows. Part of the phosphoribosylformylglycinamidine synthase complex involved in the purines biosynthetic pathway. Catalyzes the ATP-dependent conversion of formylglycinamide ribonucleotide (FGAR) and glutamine to yield formylglycinamidine ribonucleotide (FGAM) and glutamate. The FGAM synthase complex is composed of three subunits. PurQ produces an ammonia molecule by converting glutamine to glutamate. PurL transfers the ammonia molecule to FGAR to form FGAM in an ATP-dependent manner. PurS interacts with PurQ and PurL and is thought to assist in the transfer of the ammonia molecule from PurQ to PurL. This chain is Phosphoribosylformylglycinamidine synthase subunit PurL, found in Salinibacter ruber (strain DSM 13855 / M31).